The sequence spans 92 residues: Sec-independent protein translocase protein TatA (92 aa).

A helical membrane pass occupies residues 2–22 (IPANFGGTELIILLVIILLLF). The segment at 43-92 (KGTSGAYEELEEKKGEEEKDEGGKKEAEASGRGEEEQQARAAGEAGRKQG) is disordered. The segment covering 53–80 (EEKKGEEEKDEGGKKEAEASGRGEEEQQ) has biased composition (basic and acidic residues).

Belongs to the TatA/E family. As to quaternary structure, the Tat system comprises two distinct complexes: a TatABC complex, containing multiple copies of TatA, TatB and TatC subunits, and a separate TatA complex, containing only TatA subunits. Substrates initially bind to the TatABC complex, which probably triggers association of the separate TatA complex to form the active translocon.

It is found in the cell membrane. In terms of biological role, part of the twin-arginine translocation (Tat) system that transports large folded proteins containing a characteristic twin-arginine motif in their signal peptide across membranes. TatA could form the protein-conducting channel of the Tat system. This Rubrobacter xylanophilus (strain DSM 9941 / JCM 11954 / NBRC 16129 / PRD-1) protein is Sec-independent protein translocase protein TatA.